Consider the following 654-residue polypeptide: Probable Xaa-Pro aminopeptidase P (654 aa).

Residues Asp-449, Asp-460, Glu-558, and Glu-572 each coordinate Mn(2+).

This sequence belongs to the peptidase M24B family. It depends on Mn(2+) as a cofactor.

It catalyses the reaction Release of any N-terminal amino acid, including proline, that is linked to proline, even from a dipeptide or tripeptide.. Catalyzes the removal of a penultimate prolyl residue from the N-termini of peptides. The protein is Probable Xaa-Pro aminopeptidase P (ampp) of Aspergillus flavus (strain ATCC 200026 / FGSC A1120 / IAM 13836 / NRRL 3357 / JCM 12722 / SRRC 167).